The chain runs to 189 residues: Large ribosomal subunit protein bL17 (189 aa).

Residues lysine 136–lysine 189 are disordered. The segment covering alanine 141–lysine 189 has biased composition (acidic residues).

Belongs to the bacterial ribosomal protein bL17 family. Part of the 50S ribosomal subunit. Contacts protein L32.

The polypeptide is Large ribosomal subunit protein bL17 (Paenarthrobacter aurescens (strain TC1)).